The chain runs to 282 residues: Protein FRG2-like-2 (282 aa).

A compositionally biased stretch (basic and acidic residues) spans 1 to 10; that stretch reads MGKGNEDPDL. Disordered stretches follow at residues 1–96 and 249–282; these read MGKG…QENC and GPGD…LGAP. Polar residues-rich tracts occupy residues 13 to 31, 58 to 68, and 79 to 94; these read SSIQ…SFTE, RQAGSDPNPNK, and GNST…SYQE.

Belongs to the FRG2 family.

It is found in the nucleus. The sequence is that of Protein FRG2-like-2 (FRG2C) from Homo sapiens (Human).